Here is a 302-residue protein sequence, read N- to C-terminus: Recombination-associated protein RdgC (302 aa).

This sequence belongs to the RdgC family.

It localises to the cytoplasm. The protein localises to the nucleoid. May be involved in recombination. This Xylella fastidiosa (strain 9a5c) protein is Recombination-associated protein RdgC.